An 82-amino-acid polypeptide reads, in one-letter code: Polyketide biosynthesis acyl-carrier-protein AcpK (82 aa).

The Carrier domain occupies 4–79; that stretch reads QRIFEVLITN…ELAEVLYDKV (76 aa). Ser-39 carries the O-(pantetheine 4'-phosphoryl)serine modification.

Post-translationally, 4'-phosphopantetheine is transferred from CoA to a specific serine of apo-ACP by sfp.

It localises to the cytoplasm. Its pathway is antibiotic biosynthesis; bacillaene biosynthesis. Functionally, involved in some intermediate steps for the synthesis of the antibiotic polyketide bacillaene which is involved in secondary metabolism. In Bacillus subtilis (strain 168), this protein is Polyketide biosynthesis acyl-carrier-protein AcpK (acpK).